The following is a 984-amino-acid chain: Ephrin type-B receptor 1 (984 aa).

A signal peptide spans 1–17; that stretch reads MALDYLLLLLLASAVAA. Topologically, residues 18-540 are extracellular; that stretch reads MEETLMDTRT…YKSELREQLP (523 aa). An Eph LBD domain is found at 19 to 201; the sequence is EETLMDTRTA…FFKKCPSIVQ (183 aa). 2 consecutive Fibronectin type-III domains span residues 322 to 432 and 433 to 528; these read VPSG…TNQA and APST…TLTD. 3 N-linked (GlcNAc...) asparagine glycosylation sites follow: Asn-334, Asn-426, and Asn-480. The helical transmembrane segment at 541-563 threads the bilayer; sequence LIAGSAAAGVVFVVSLVAISIVC. The Cytoplasmic portion of the chain corresponds to 564–984; the sequence is SRKRAYSKEA…QISQSPTAMA (421 aa). Tyr-600 carries the phosphotyrosine modification. Residues 619-882 form the Protein kinase domain; it reads VKIEEVIGAG…EIVNTLDKMI (264 aa). ATP-binding positions include 625 to 633 and Lys-651; that span reads IGAGEFGEV. Asp-744 (proton acceptor) is an active-site residue. An SAM domain is found at 911 to 975; sequence TAFTTVDDWL…LNSIHSMRVQ (65 aa). At Tyr-928 the chain carries Phosphotyrosine; by autocatalysis. The PDZ-binding motif lies at 982–984; it reads AMA.

It belongs to the protein kinase superfamily. Tyr protein kinase family. Ephrin receptor subfamily. Heterotetramer upon binding of the ligand. The heterotetramer is composed of an ephrin dimer and a receptor dimer. Oligomerization is probably required to induce biological responses. Interacts with EPHB6; transphosphorylates EPHB6 to form an active signaling complex. Interacts with PICK1. Interacts (through Tyr-594) with NCK1 (via SH2 domain); activates the JUN cascade to regulate cell adhesion. The ligand-activated form interacts (through Tyr-928) with GRB7 and GRB10 (via SH2 domains). The ligand-activated form interacts (residues within the catalytic domain) with GRB2 (via SH2 domain). Interacts with GRB2, SHC1 and SRC; activates the MAPK/ERK cascade to regulate cell migration. Interacts with CBL; regulates receptor degradation through ubiquitination. Interacts with ACP1. In terms of processing, phosphorylated. Autophosphorylation is stimulated by the ligand EFNB1. Required for interaction with SH2 domain-containing interactors, for activation of the MAPK/ERK and JUN signaling cascades and for ubiquitination by CBL. Ubiquitinated; (EFNB1)ligand-induced poly- and/or multi-ubiquitination by CBL is regulated by SRC and leads to lysosomal degradation. As to expression, preferentially expressed in brain.

The protein localises to the cell membrane. It is found in the early endosome membrane. Its subcellular location is the cell projection. The protein resides in the dendrite. It catalyses the reaction L-tyrosyl-[protein] + ATP = O-phospho-L-tyrosyl-[protein] + ADP + H(+). In terms of biological role, receptor tyrosine kinase which binds promiscuously transmembrane ephrin-B family ligands residing on adjacent cells, leading to contact-dependent bidirectional signaling into neighboring cells. The signaling pathway downstream of the receptor is referred to as forward signaling while the signaling pathway downstream of the ephrin ligand is referred to as reverse signaling. Cognate/functional ephrin ligands for this receptor include EFNB1, EFNB2 and EFNB3. During nervous system development, regulates retinal axon guidance redirecting ipsilaterally ventrotemporal retinal ganglion cells axons at the optic chiasm midline. This probably requires repulsive interaction with EFNB2. In the adult nervous system together with EFNB3, regulates chemotaxis, proliferation and polarity of the hippocampus neural progenitors. In addition to its role in axon guidance also plays an important redundant role with other ephrin-B receptors in development and maturation of dendritic spines and synapse formation. May also regulate angiogenesis. More generally, may play a role in targeted cell migration and adhesion. Upon activation by EFNB1 and probably other ephrin-B ligands activates the MAPK/ERK and the JNK signaling cascades to regulate cell migration and adhesion respectively. Involved in the maintenance of the pool of satellite cells (muscle stem cells) by promoting their self-renewal and reducing their activation and differentiation. The chain is Ephrin type-B receptor 1 (EPHB1) from Homo sapiens (Human).